A 475-amino-acid polypeptide reads, in one-letter code: Ribulose bisphosphate carboxylase large chain (475 aa).

Residues 1–2 (MS) constitute a propeptide that is removed on maturation. Pro3 carries the post-translational modification N-acetylproline. N6,N6,N6-trimethyllysine is present on Lys14. Positions 123 and 173 each coordinate substrate. Lys175 serves as the catalytic Proton acceptor. Position 177 (Lys177) interacts with substrate. Mg(2+)-binding residues include Lys201, Asp203, and Glu204. Lys201 carries the N6-carboxylysine modification. The Proton acceptor role is filled by His294. Residues Arg295, His327, and Ser379 each coordinate substrate.

Belongs to the RuBisCO large chain family. Type I subfamily. As to quaternary structure, heterohexadecamer of 8 large chains and 8 small chains; disulfide-linked. The disulfide link is formed within the large subunit homodimers. Mg(2+) serves as cofactor. Post-translationally, the disulfide bond which can form in the large chain dimeric partners within the hexadecamer appears to be associated with oxidative stress and protein turnover.

It is found in the plastid. Its subcellular location is the chloroplast. The enzyme catalyses 2 (2R)-3-phosphoglycerate + 2 H(+) = D-ribulose 1,5-bisphosphate + CO2 + H2O. The catalysed reaction is D-ribulose 1,5-bisphosphate + O2 = 2-phosphoglycolate + (2R)-3-phosphoglycerate + 2 H(+). Its function is as follows. RuBisCO catalyzes two reactions: the carboxylation of D-ribulose 1,5-bisphosphate, the primary event in carbon dioxide fixation, as well as the oxidative fragmentation of the pentose substrate in the photorespiration process. Both reactions occur simultaneously and in competition at the same active site. The polypeptide is Ribulose bisphosphate carboxylase large chain (Physcomitrium patens (Spreading-leaved earth moss)).